A 502-amino-acid polypeptide reads, in one-letter code: Ubiquitin-like-specific protease 1A (502 aa).

Catalysis depends on residues histidine 393, aspartate 410, and cysteine 461.

Belongs to the peptidase C48 family.

Protease that catalyzes two essential functions in the SUMO pathway: processing of full-length SUMOs to their mature forms and deconjugation of SUMO from targeted proteins. Cleaves precursors of SUM1 and SUM2, and very inefficiently of SUM3. Seems to be the only ULP1 able to cleave SUM3 precursors. Cleaves SUMO peptides better than SUMO-conjugated proteins. The sequence is that of Ubiquitin-like-specific protease 1A (ULP1A) from Arabidopsis thaliana (Mouse-ear cress).